A 174-amino-acid polypeptide reads, in one-letter code: Dehydratase AgnL8 (174 aa).

Substrate is bound by residues Tyr24, Tyr44, and Phe47. Catalysis depends on residues His79 and His104.

Belongs to the scytalone dehydratase family. In terms of assembly, homotrimer. Each subunit contains an active site, located in the central part of the hydrophobic core of the monomer, which functions independently.

The protein operates within secondary metabolite biosynthesis. Functionally, dehydratase; part of the gene cluster that mediates the biosynthesis of agnestins, dihydroxy-xanthone metabolites. The pathway begins with the assembly and cyclization of atrochrysone thioester by the non-reducing polyketide synthase Agnpks1. The atrochrysone carboxyl ACP thioesterase AgnL7 then breaks the thioester bond and releases the atrochrysone carboxylic acid as the first enzyme-free intermediate. The decarboxylase AgnL1 then catalyzes the concerted decarboxylation-elimination required to convert atochrysone carboxylic acid into emodin anthrone, which is further oxidized to emodin by the anthrone oxygenase AgnL2. Emodin then undergoes reduction catalyzed by the oxidoreductase AgnL4 to yield the dihydroquinone tautomer which is the substrate for reduction by the short chain dehydrogenase AgnL6 reduction to produce hydroxyketone, followed by AgnL8 dehydration and likely spontaneous autoxidation to chrysophanol. Baeyer-Villiger oxidation by the oxidase AgnL3 leads to monodictyphenone via cleavage of the C-10/C-10a bond of chrysophanol. Alternative cleavage at the C-4a/C-10 bond of chrysophanol also leads to the formation some cephalone F. Further conversion to agnestins A and B, requires reduction to dihydro-monodictyphenone, oxidation to agnestin C probably via an epoxide, and rearrangement to either agnestin A or agnestin B directly, although agnestin A or agnestin B can also interconvert. Within the cluster, AgnR1 is the only unassigned oxidoreductase present which could be involved in this conversion. However, AgnR1 seems not to be involved in this step, and thus genes involved in the proposed oxidation/reduction may be located elsewhere on the genome. Further agnestin A derivatives are probably formed by spontaneous decarboxylations, dehydrations and methanolysis reactions. The chain is Dehydratase AgnL8 from Paecilomyces divaricatus (Penicillium divaricatum).